We begin with the raw amino-acid sequence, 483 residues long: Probable ATP-dependent RNA helicase DDX49 (483 aa).

The Q motif signature appears at 2 to 30 (AGFAELGLSSWLVEQCRQLGLKQPTPVQL). The 175-residue stretch at 33–207 (IPAILEGRDC…GLATNQPFFW (175 aa)) folds into the Helicase ATP-binding domain. 46–53 (AKTGSGKT) lines the ATP pocket. The DEAD box signature appears at 152–155 (DEAD). One can recognise a Helicase C-terminal domain in the interval 218–382 (QLDQRYLLVP…EFSVEEAEVL (165 aa)). The tract at residues 444 to 483 (KEKVEETLKRQKAGRAGHKGRPPRTPSGSHSGPVPSQGLV) is disordered. The segment covering 453–465 (RQKAGRAGHKGRP) has biased composition (basic residues).

Belongs to the DEAD box helicase family. DDX49/DBP8 subfamily.

The protein resides in the nucleus. The protein localises to the nucleolus. It carries out the reaction ATP + H2O = ADP + phosphate + H(+). Functionally, ATP-dependent RNA helicase that plays a role in various aspects of RNA metabolism including the regulation of mRNA export and the levels of pre-ribosomal RNA. Regulates the stability and synthesis of pre-ribosomal RNA and thereby regulates cell proliferation. Also possesses antiviral activity by recognizing gammaherpesvirus transcripts in the context of lytic reactivation. This Homo sapiens (Human) protein is Probable ATP-dependent RNA helicase DDX49 (DDX49).